A 373-amino-acid chain; its full sequence is Glutamine synthetase (373 aa).

Residue A2 is modified to N-acetylalanine. Residues 2–25 (ATSASSHLNKGIKQMYMSLPQGEK) form a required for glutamine-induced ubiquitination by CRL4(CRBN) and proteasomal degradation region. N6-acetyllysine occurs at positions 11 and 14. Residues 24–106 (EKVQAMYIWV…VFCEVFKYNQ (83 aa)) enclose the GS beta-grasp domain. Y104 carries the post-translational modification Phosphotyrosine. The GS catalytic domain maps to 113 to 373 (LRHTCKRIMD…TGDQPFQYKN (261 aa)). E134 provides a ligand contact to ATP. Mn(2+)-binding residues include E134, E136, E196, and E203. 203-208 (EFQIGP) lines the ATP pocket. 246-247 (NW) is an L-glutamate binding site. Mn(2+) is bound at residue H253. ATP contacts are provided by residues 255-257 (NFS), R319, and R324. R319 is a binding site for L-glutamate. 336-338 (YFE) contacts ADP. E338 contributes to the Mn(2+) binding site. R340 contributes to the L-glutamate binding site. At S343 the chain carries Phosphoserine.

This sequence belongs to the glutamine synthetase family. As to quaternary structure, decamer; composed of two pentamers. Interacts with PALMD. Interacts with RHOJ. Interacts with BEST2; this interaction tethers a fraction of GLUL to the membrane, causing a decrease of cytosolic glutamine synthase (GS) activity and inhibits the chloride channel activity of BEST2 by affecting the gating at the aperture in the absence of intracellular glutamate. Mg(2+) is required as a cofactor. Requires Mn(2+) as cofactor. Palmitoylated; undergoes autopalmitoylation. In terms of processing, acetylated by EP300/p300; acetylation is stimulated by increased glutamine levels and promotes ubiquitin-mediated proteasomal degradation. Post-translationally, ubiquitinated by ZNRF1. Ubiquitinated by the DCX (DDB1-CUL4-X-box) E3 ubiquitin-protein ligase complex called CRL4(CRBN), leading to proteasomal degradation.

The protein resides in the cytoplasm. The protein localises to the cytosol. It is found in the microsome. Its subcellular location is the mitochondrion. It localises to the cell membrane. It catalyses the reaction L-glutamate + NH4(+) + ATP = L-glutamine + ADP + phosphate + H(+). The enzyme catalyses L-cysteinyl-[protein] + hexadecanoyl-CoA = S-hexadecanoyl-L-cysteinyl-[protein] + CoA. Glutamine synthetase activity is inhibited by methionine sulfoximine (MSO). In terms of biological role, glutamine synthetase that catalyzes the ATP-dependent conversion of glutamate and ammonia to glutamine. Its role depends on tissue localization: in the brain, it regulates the levels of toxic ammonia and converts neurotoxic glutamate to harmless glutamine, whereas in the liver, it is one of the enzymes responsible for the removal of ammonia. Plays a key role in ammonium detoxification during erythropoiesis: the glutamine synthetase activity is required to remove ammonium generated by porphobilinogen deaminase (HMBS) during heme biosynthesis to prevent ammonium accumulation and oxidative stress. Essential for proliferation of fetal skin fibroblasts. Independently of its glutamine synthetase activity, required for endothelial cell migration during vascular development. Involved in angiogenesis by regulating membrane localization and activation of the GTPase RHOJ, possibly by promoting RHOJ palmitoylation. May act as a palmitoyltransferase for RHOJ: able to autopalmitoylate and then transfer the palmitoyl group to RHOJ. Plays a role in ribosomal 40S subunit biogenesis. Through the interaction with BEST2, inhibits BEST2 channel activity by affecting the gating at the aperture in the absence of intracellular L-glutamate, but sensitizes BEST2 to intracellular L-glutamate, which promotes the opening of BEST2 and thus relieves its inhibitory effect on BEST2. In Cricetulus griseus (Chinese hamster), this protein is Glutamine synthetase.